Consider the following 61-residue polypeptide: Metallothionein-1M (61 aa).

The interval 1 to 29 (MDPNCSCTTGVSCACTGSCTCKECKCTSC) is beta. C5, C7, C13, C15, C19, C21, C24, C26, C29, C33, C34, C36, C37, C41, C44, C48, C50, C57, C59, and C60 together coordinate a divalent metal cation. Residues 30 to 61 (KKSCCSCCPVGCAKCAHGCVCKGTLENCSCCA) form an alpha region.

This sequence belongs to the metallothionein superfamily. Type 1 family. In terms of assembly, monomer.

Functionally, metallothioneins have a high content of cysteine residues that bind various heavy metals; these proteins are transcriptionally regulated by both heavy metals and glucocorticoids. The protein is Metallothionein-1M (MT1M) of Homo sapiens (Human).